We begin with the raw amino-acid sequence, 125 residues long: MKHYEVLFILKPTLTEEEVNAKLEFVKEVLTKNGAEIETVVPMGTRKLAYKIKKYERGTYFVIYFKAPTNLIAELERVLRITEEVIRFLIVKYENKKEIAAWEKLSHGIKQSKKEIKPLDAPEIQ.

Belongs to the bacterial ribosomal protein bS6 family.

Binds together with bS18 to 16S ribosomal RNA. This chain is Small ribosomal subunit protein bS6, found in Campylobacter jejuni subsp. jejuni serotype O:23/36 (strain 81-176).